A 412-amino-acid polypeptide reads, in one-letter code: MKILVIGSGGREHALAKKFMESPQVEEVFVAPGNSGMEKDGIQIVDISELSNDKLVKFAQNQNIGLTFVGPETALMNGVVDAFIKAELPIFGPNKMAAELEGSKDFAKSIMKKYGVPTADYATFDSLEPALAYLDEKGVPLVIKADGLAAGKGVTVAFDIETAKSALADIFSGSQGKVVIEEFLDGEEFSLFSFIHDGKIYPMPIAQDHKRAFDGDKGPNTGGMGAYSPVLHISKEVVNEALEKVVKPTVAGMIEEGKSFTGVLYAGLILTEDGVKTIEFNARFGDPETQVVLPRLKSDLAQAIIDILAGNEPTLEWLESGVTLGVVVAAEGYPSQAKLGLILPEIPEGLNVYYAGVSKNENNQLISSGGRVYLVSETGEDVKSTQKLLYEKLDKLENDGFFYRHDIGSRAI.

In terms of domain architecture, ATP-grasp spans 108–309 (KSIMKKYGVP…LAQAIIDILA (202 aa)). 134-190 (LDEKGVPLVIKADGLAAGKGVTVAFDIETAKSALADIFSGSQGKVVIEEFLDGEEFS) is an ATP binding site. The Mg(2+) site is built by Glu279 and Asn281.

It belongs to the GARS family. The cofactor is Mg(2+). Mn(2+) serves as cofactor.

It carries out the reaction 5-phospho-beta-D-ribosylamine + glycine + ATP = N(1)-(5-phospho-beta-D-ribosyl)glycinamide + ADP + phosphate + H(+). Its pathway is purine metabolism; IMP biosynthesis via de novo pathway; N(1)-(5-phospho-D-ribosyl)glycinamide from 5-phospho-alpha-D-ribose 1-diphosphate: step 2/2. In Lactococcus lactis subsp. lactis (strain IL1403) (Streptococcus lactis), this protein is Phosphoribosylamine--glycine ligase.